A 192-amino-acid polypeptide reads, in one-letter code: 7-methyl-GTP pyrophosphatase (192 aa).

Catalysis depends on aspartate 69, which acts as the Proton acceptor.

It belongs to the Maf family. YceF subfamily. It depends on a divalent metal cation as a cofactor.

Its subcellular location is the cytoplasm. The enzyme catalyses N(7)-methyl-GTP + H2O = N(7)-methyl-GMP + diphosphate + H(+). In terms of biological role, nucleoside triphosphate pyrophosphatase that hydrolyzes 7-methyl-GTP (m(7)GTP). May have a dual role in cell division arrest and in preventing the incorporation of modified nucleotides into cellular nucleic acids. The sequence is that of 7-methyl-GTP pyrophosphatase (maf-1) from Pseudomonas syringae pv. tomato (strain ATCC BAA-871 / DC3000).